A 608-amino-acid chain; its full sequence is uncharacterized protein (608 aa).

The chain crosses the membrane as a helical span at residues 4-24 (LIFMALLMSLLFIGTVFGYGD).

This sequence to M.jannaschii MJ1394 and A.fulgidus AF2028.

Its subcellular location is the membrane. This is an uncharacterized protein from Methanocaldococcus jannaschii (strain ATCC 43067 / DSM 2661 / JAL-1 / JCM 10045 / NBRC 100440) (Methanococcus jannaschii).